Consider the following 662-residue polypeptide: ABC transporter G family member 17 (662 aa).

The 255-residue stretch at 22–276 (LAFNDLTYNV…FSEFGSPIPE (255 aa)) folds into the ABC transporter domain. 69-76 (GASGAGKS) lines the ATP pocket. The 211-residue stretch at 356–566 (VETVILAKRY…PYEAVLHNEF (211 aa)) folds into the ABC transmembrane type-2 domain. The next 6 helical transmembrane spans lie at 375–395 (LIGTRVFIVMMTGFLLATVYW), 410–430 (FFSFAMATMFYSCADGLPAFI), 451–471 (VISHSLVTLPHLFALSIGFAA), 486–508 (FIYYLMIIFASFWSGCSFVTFVS), 514–536 (VMMSYMVTFGYLSYCLLFSGFYV), and 635–655 (LWVTLAWGFFFRILFYFSLLL).

Belongs to the ABC transporter superfamily. ABCG family. Eye pigment precursor importer (TC 3.A.1.204) subfamily.

It localises to the membrane. In Arabidopsis thaliana (Mouse-ear cress), this protein is ABC transporter G family member 17 (ABCG17).